The chain runs to 131 residues: Probable ATP synthase subunit g 1, mitochondrial (131 aa).

Belongs to the ATPase g subunit family. In terms of assembly, subunit of the F-type ATPase which has 2 components, CF(1) - the catalytic core - and CF(0) - the membrane proton channel.

The protein localises to the mitochondrion membrane. Its function is as follows. Mitochondrial membrane ATP synthase (F(1)F(0) ATP synthase or Complex V) produces ATP from ADP in the presence of a proton gradient across the membrane which is generated by electron transport complexes of the respiratory chain. F-type ATPases consist of two structural domains, F(1) - containing the extramembraneous catalytic core, and F(0) - containing the membrane proton channel, linked together by a central stalk and a peripheral stalk. During catalysis, ATP synthesis in the catalytic domain of F(1) is coupled via a rotary mechanism of the central stalk subunits to proton translocation. Part of the complex F(0) domain. Minor subunit located with subunit a in the membrane. The sequence is that of Probable ATP synthase subunit g 1, mitochondrial from Caenorhabditis elegans.